Here is a 664-residue protein sequence, read N- to C-terminus: tRNA (carboxymethyluridine(34)-5-O)-methyltransferase ALKBH8 (664 aa).

The RRM domain occupies 43–120; sequence QSLVVANGGL…QKIILYLNFV (78 aa). The Fe2OG dioxygenase domain occupies 220-337; the sequence is KPDQMTINQY…RTSFTFRKVR (118 aa). 227–229 is a 2-oxoglutarate binding site; sequence NQY. H238 and D240 together coordinate Fe cation. H242 contacts Zn(2+). H292 is a binding site for Fe cation. Residues R328 and R334 each contribute to the 2-oxoglutarate site. 3 residues coordinate Zn(2+): C341, C343, and C349. The tract at residues 411-664 is methyltransferase domain; it reads ADIGCGNGKY…GNWCVILQKA (254 aa). The interval 516-575 is disordered; the sequence is KYLKGNRNSQGKKEEMNSDTSVQRSLVEQMPDMGSRDSASSVPRINDSQEGGCNSRQVSN. Residues 552 to 575 are compositionally biased toward polar residues; that stretch reads DSASSVPRINDSQEGGCNSRQVSN.

The protein belongs to the alkB family. Interacts with TRMT112. Requires Fe(2+) as cofactor.

The protein localises to the cytoplasm. The protein resides in the nucleus. The catalysed reaction is 5-(carboxymethyl)uridine(34) in tRNA + S-adenosyl-L-methionine = 5-(2-methoxy-2-oxoethyl)uridine(34) in tRNA + S-adenosyl-L-homocysteine. Its function is as follows. Catalyzes the methylation of 5-carboxymethyl uridine to 5-methylcarboxymethyl uridine at the wobble position of the anticodon loop in tRNA via its methyltransferase domain. Catalyzes the last step in the formation of 5-methylcarboxymethyl uridine at the wobble position of the anticodon loop in target tRNA. Has a preference for tRNA(Arg) and tRNA(Glu), and does not bind tRNA(Lys). Binds tRNA and catalyzes the iron and alpha-ketoglutarate dependent hydroxylation of 5-methylcarboxymethyl uridine at the wobble position of the anticodon loop in tRNA via its dioxygenase domain, giving rise to 5-(S)-methoxycarbonylhydroxymethyluridine; has a preference for tRNA(Gly). Required for normal survival after DNA damage. May inhibit apoptosis and promote cell survival and angiogenesis. This chain is tRNA (carboxymethyluridine(34)-5-O)-methyltransferase ALKBH8 (ALKBH8), found in Macaca fascicularis (Crab-eating macaque).